Consider the following 1115-residue polypeptide: Scavenger receptor cysteine-rich type 1 protein M130 (1115 aa).

A signal peptide spans 1–46; sequence MDKLRMVLHENSGSADFRRCSAHLSSFTFAVVAVLSACLVTSSLGG. Residues 47-1044 are Extracellular-facing; sequence KDKELRLTGG…ESLHATGRSS (998 aa). SRCR domains follow at residues 51–151, 158–258, 265–365, 372–472, 477–577, 582–682, 718–818, 823–925, and 928–1028; these read LRLT…VTCS, MGLV…VICL, LRVV…VTCS, LRLK…ITCS, PRLV…VVCS, IRLV…VICS, LRLV…VICS, LRLI…ITCA, and IRLQ…VTCS. 23 disulfide bridges follow: Cys76/Cys140, Cys89/Cys150, Cys120/Cys130, Cys183/Cys247, Cys196/Cys257, Cys227/Cys237, Cys290/Cys354, Cys303/Cys364, Cys334/Cys344, Cys397/Cys461, Cys410/Cys471, Cys441/Cys451, Cys502/Cys566, Cys515/Cys576, Cys546/Cys556, Cys607/Cys671, Cys620/Cys681, Cys651/Cys661, Cys743/Cys807, Cys756/Cys817, Cys787/Cys797, Cys863/Cys924, and Cys894/Cys904. N-linked (GlcNAc...) asparagine glycosylation occurs at Asn105. Asn139 carries N-linked (GlcNAc...) asparagine glycosylation. Asn936 carries N-linked (GlcNAc...) asparagine glycosylation. Intrachain disulfides connect Cys953–Cys1017, Cys966–Cys1027, and Cys997–Cys1007. The chain crosses the membrane as a helical span at residues 1045–1065; sequence FVALAIFGVILLACLIAFLIW. Residues 1066-1115 are Cytoplasmic-facing; it reads TQKRRQRQRLSVFSGGENSVHQIQYREMNSCLKADETDMLNPSGDHSEVQ. An Internalization signal motif is present at residues 1090–1093; it reads YREM.

Interacts with CSNK2B. A soluble form (sCD163) is produced by proteolytic shedding which can be induced by lipopolysaccharide, phorbol ester and Fc region of immunoglobulin gamma. This cleavage is dependent on protein kinase C and tyrosine kinases and can be blocked by protease inhibitors. The shedding is inhibited by the tissue inhibitor of metalloproteinase TIMP3, and thus probably induced by membrane-bound metalloproteinases ADAMs. In terms of processing, phosphorylated. Expressed in monocytes and macrophages. Detected only in one population of monocytes (CD163+) which is in advanced maturation stage.

Its subcellular location is the secreted. The protein resides in the cell membrane. In terms of biological role, involved in clearance and endocytosis of hemoglobin/haptoglobin complexes by macrophages and may thereby protect tissues from free hemoglobin-mediated oxidative damage. May play a role in the uptake and recycling of iron, via endocytosis of hemoglobin/haptoglobin and subsequent breakdown of heme. Binds hemoglobin/haptoglobin complexes in a calcium-dependent and pH-dependent manner. Induces a cascade of intracellular signals that involves tyrosine kinase-dependent calcium mobilization, inositol triphosphate production and secretion of IL6 and CSF1. May play a role in the process of infection of porcine monocytes/macrophages by African swine fever virus (ASFV). In case of porcine reproductive and respiratory syndrome virus (PRRSV), serves mediates virion attachment and plays a role in viral entry. Functionally, after shedding, the soluble form (sCD163) may play an anti-inflammatory role. The polypeptide is Scavenger receptor cysteine-rich type 1 protein M130 (CD163) (Sus scrofa (Pig)).